The chain runs to 325 residues: Reaction center protein M chain (325 aa).

Helical transmembrane passes span 53–79 (LGFTGTLSIIFGFMAIFIIGFNMLASV), 111–140 (EGGWWLMAGFFLTMSILLWWVRTYKRAEAL), and 143–168 (SQHLSWAFAAAIFFYLSLGFIRPVMM). 2 residues coordinate (7R,8Z)-bacteriochlorophyll b: His-182 and His-202. A helical membrane pass occupies residues 198 to 226 (YNPFHMLSIAFLYGSALLFAMHGATILAV). Residues His-219 and Glu-234 each contribute to the Fe cation site. Trp-252 serves as a coordination point for a ubiquinone. Residue His-266 participates in Fe cation binding.

Belongs to the reaction center PufL/M/PsbA/D family. In terms of assembly, reaction center is composed of four bacteriochlorophylls, two bacteriopheophytins, two ubiquinones, one iron, and two highly hydrophobic polypeptide chains (designated L and M).

The protein resides in the cellular chromatophore membrane. The reaction center is a membrane-bound complex that mediates the initial photochemical event in the electron transfer process of photosynthesis. The chain is Reaction center protein M chain (pufM) from Allochromatium vinosum (strain ATCC 17899 / DSM 180 / NBRC 103801 / NCIMB 10441 / D) (Chromatium vinosum).